Here is a 351-residue protein sequence, read N- to C-terminus: GDSL esterase/lipase At3g14820 (351 aa).

A signal peptide spans 1 to 22 (MDLHLIGFLLWFFVVQVTTSSA). Asparagine 25 carries an N-linked (GlcNAc...) asparagine glycan. The Nucleophile role is filled by serine 39. Active-site residues include aspartate 325 and histidine 328.

The protein belongs to the 'GDSL' lipolytic enzyme family.

It is found in the secreted. The chain is GDSL esterase/lipase At3g14820 from Arabidopsis thaliana (Mouse-ear cress).